The chain runs to 36 residues: Photosystem I reaction center subunit VIII (36 aa).

Residues Ile-9 to Tyr-29 form a helical membrane-spanning segment.

It belongs to the PsaI family.

Its subcellular location is the plastid. It is found in the chloroplast thylakoid membrane. May help in the organization of the PsaL subunit. The chain is Photosystem I reaction center subunit VIII from Ostreococcus tauri.